A 491-amino-acid polypeptide reads, in one-letter code: GTPase Der (491 aa).

2 EngA-type G domains span residues Pro3–Met166 and Ile200–Thr373. GTP is bound by residues Gly9–Ser16, Asp56–Ile60, Asn118–Asp121, Gly206–Ser213, Asp253–Val257, and Asn318–Asp321. One can recognise a KH-like domain in the interval Arg374–Asp458. The tract at residues Gln472 to Glu491 is disordered.

The protein belongs to the TRAFAC class TrmE-Era-EngA-EngB-Septin-like GTPase superfamily. EngA (Der) GTPase family. In terms of assembly, associates with the 50S ribosomal subunit.

In terms of biological role, GTPase that plays an essential role in the late steps of ribosome biogenesis. The protein is GTPase Der of Shewanella denitrificans (strain OS217 / ATCC BAA-1090 / DSM 15013).